The primary structure comprises 152 residues: Protein Smg homolog (152 aa).

This sequence belongs to the Smg family.

This Bordetella avium (strain 197N) protein is Protein Smg homolog.